The chain runs to 164 residues: FMN reductase (NADH) RutF (164 aa).

Belongs to the non-flavoprotein flavin reductase family. RutF subfamily.

The catalysed reaction is FMNH2 + NAD(+) = FMN + NADH + 2 H(+). In terms of biological role, catalyzes the reduction of FMN to FMNH2 which is used to reduce pyrimidine by RutA via the Rut pathway. This chain is FMN reductase (NADH) RutF, found in Shigella flexneri serotype X (strain 2002017).